The sequence spans 255 residues: Methionine aminopeptidase (255 aa).

H76 serves as a coordination point for substrate. D93, D104, and H167 together coordinate a divalent metal cation. H174 is a substrate binding site. A divalent metal cation contacts are provided by E201 and E232.

It belongs to the peptidase M24A family. Methionine aminopeptidase type 1 subfamily. Monomer. The cofactor is Co(2+). It depends on Zn(2+) as a cofactor. Mn(2+) is required as a cofactor. Requires Fe(2+) as cofactor.

The enzyme catalyses Release of N-terminal amino acids, preferentially methionine, from peptides and arylamides.. Removes the N-terminal methionine from nascent proteins. The N-terminal methionine is often cleaved when the second residue in the primary sequence is small and uncharged (Met-Ala-, Cys, Gly, Pro, Ser, Thr, or Val). Requires deformylation of the N(alpha)-formylated initiator methionine before it can be hydrolyzed. This is Methionine aminopeptidase from Treponema pallidum (strain Nichols).